The chain runs to 205 residues: Peptidyl-tRNA hydrolase (205 aa).

Y18 serves as a coordination point for tRNA. The active-site Proton acceptor is the H23. 3 residues coordinate tRNA: Y69, N71, and N117.

This sequence belongs to the PTH family. As to quaternary structure, monomer.

It is found in the cytoplasm. The enzyme catalyses an N-acyl-L-alpha-aminoacyl-tRNA + H2O = an N-acyl-L-amino acid + a tRNA + H(+). In terms of biological role, hydrolyzes ribosome-free peptidyl-tRNAs (with 1 or more amino acids incorporated), which drop off the ribosome during protein synthesis, or as a result of ribosome stalling. Its function is as follows. Catalyzes the release of premature peptidyl moieties from peptidyl-tRNA molecules trapped in stalled 50S ribosomal subunits, and thus maintains levels of free tRNAs and 50S ribosomes. This chain is Peptidyl-tRNA hydrolase, found in Thermosynechococcus vestitus (strain NIES-2133 / IAM M-273 / BP-1).